Reading from the N-terminus, the 586-residue chain is Probable zinc metalloprotease EGY3, chloroplastic (586 aa).

The transit peptide at 1–54 directs the protein to the chloroplast; sequence MSSSSLVTSLLFSSSSSSNTATSTSSRRSFSLFSKNQYCKPSPLRRSSSLLLVR. The segment covering 62-73 has biased composition (basic and acidic residues); it reads EEKAAPAAESHH. The interval 62-118 is disordered; sequence EEKAAPAAESHHAGGGQDDAATASHHAVEGENGVADADGGGVKKSKEELEEEEQQEV. Residues 103 to 195 are a coiled coil; sequence VKKSKEELEE…NTFKALDLNK (93 aa). 7 helical membrane passes run 287 to 307, 318 to 338, 389 to 409, 427 to 447, 454 to 474, 506 to 526, and 550 to 570; these read LSAV…SGFF, VSDV…SEIA, ASAY…DGSL, PLLS…GNVL, VGVP…VTSL, VALG…WGLF, and YAWG…NGGG.

Belongs to the peptidase M50B family.

The protein resides in the plastid. The protein localises to the chloroplast membrane. Functionally, probable membrane-associated metalloprotease that may be involved in chloroplast development. The polypeptide is Probable zinc metalloprotease EGY3, chloroplastic (EGY3) (Oryza sativa subsp. indica (Rice)).